The chain runs to 186 residues: ATP synthase subunit delta (186 aa).

The protein belongs to the ATPase delta chain family. F-type ATPases have 2 components, F(1) - the catalytic core - and F(0) - the membrane proton channel. F(1) has five subunits: alpha(3), beta(3), gamma(1), delta(1), epsilon(1). F(0) has three main subunits: a(1), b(2) and c(10-14). The alpha and beta chains form an alternating ring which encloses part of the gamma chain. F(1) is attached to F(0) by a central stalk formed by the gamma and epsilon chains, while a peripheral stalk is formed by the delta and b chains.

It localises to the cell inner membrane. F(1)F(0) ATP synthase produces ATP from ADP in the presence of a proton or sodium gradient. F-type ATPases consist of two structural domains, F(1) containing the extramembraneous catalytic core and F(0) containing the membrane proton channel, linked together by a central stalk and a peripheral stalk. During catalysis, ATP synthesis in the catalytic domain of F(1) is coupled via a rotary mechanism of the central stalk subunits to proton translocation. Its function is as follows. This protein is part of the stalk that links CF(0) to CF(1). It either transmits conformational changes from CF(0) to CF(1) or is implicated in proton conduction. In Mesorhizobium japonicum (strain LMG 29417 / CECT 9101 / MAFF 303099) (Mesorhizobium loti (strain MAFF 303099)), this protein is ATP synthase subunit delta.